A 276-amino-acid polypeptide reads, in one-letter code: Diaminopimelate epimerase (276 aa).

Residues N13, Q46, and N66 each coordinate substrate. The Proton donor role is filled by C75. Residues 76 to 77, N159, N192, and 210 to 211 each bind substrate; these read GN and ER. The active-site Proton acceptor is the C219. Residue 220-221 coordinates substrate; it reads GT.

The protein belongs to the diaminopimelate epimerase family. Homodimer.

The protein localises to the cytoplasm. The enzyme catalyses (2S,6S)-2,6-diaminopimelate = meso-2,6-diaminopimelate. It functions in the pathway amino-acid biosynthesis; L-lysine biosynthesis via DAP pathway; DL-2,6-diaminopimelate from LL-2,6-diaminopimelate: step 1/1. In terms of biological role, catalyzes the stereoinversion of LL-2,6-diaminopimelate (L,L-DAP) to meso-diaminopimelate (meso-DAP), a precursor of L-lysine and an essential component of the bacterial peptidoglycan. This Ectopseudomonas mendocina (strain ymp) (Pseudomonas mendocina) protein is Diaminopimelate epimerase.